Consider the following 602-residue polypeptide: Elongation factor 4 (602 aa).

One can recognise a tr-type G domain in the interval 6–188 (DHIRNFSIVA…AIVNKLPAPK (183 aa)). GTP-binding positions include 18-23 (DHGKST) and 135-138 (NKID).

The protein belongs to the TRAFAC class translation factor GTPase superfamily. Classic translation factor GTPase family. LepA subfamily.

The protein resides in the cell inner membrane. The catalysed reaction is GTP + H2O = GDP + phosphate + H(+). Functionally, required for accurate and efficient protein synthesis under certain stress conditions. May act as a fidelity factor of the translation reaction, by catalyzing a one-codon backward translocation of tRNAs on improperly translocated ribosomes. Back-translocation proceeds from a post-translocation (POST) complex to a pre-translocation (PRE) complex, thus giving elongation factor G a second chance to translocate the tRNAs correctly. Binds to ribosomes in a GTP-dependent manner. This chain is Elongation factor 4, found in Brucella melitensis biotype 2 (strain ATCC 23457).